Here is a 525-residue protein sequence, read N- to C-terminus: Ribonuclease III domain-containing protein RNC1, chloroplastic (525 aa).

The transit peptide at 1–28 (MGPPAMAFQALTLTPLPFSLHSSSRRVR) directs the protein to the chloroplast. RNase III domains follow at residues 125–271 (LLEA…LCFG) and 403–503 (EHPR…CVYG).

As to quaternary structure, interacts with RNA. Part of large ribonucleo-protein particles that contain CAF1 and/or CAF2.

The protein resides in the plastid. Its subcellular location is the chloroplast stroma. In terms of biological role, binds specific group II introns in chloroplasts and facilitates their splicing. Acts on both subgroup IIA and subgroup IIB introns. The substrates of the subgroup II also require the CRM domain proteins CAF1 or CAF2. Binds both single-stranded and double-stranded RNA non-specifically, but lacks endonuclease activity. Required for plastid ribosome biogenesis. The protein is Ribonuclease III domain-containing protein RNC1, chloroplastic of Zea mays (Maize).